Reading from the N-terminus, the 57-residue chain is Small ribosomal subunit protein bS21 (57 aa).

The protein belongs to the bacterial ribosomal protein bS21 family.

In Bacillus cytotoxicus (strain DSM 22905 / CIP 110041 / 391-98 / NVH 391-98), this protein is Small ribosomal subunit protein bS21.